A 150-amino-acid polypeptide reads, in one-letter code: UPF0178 protein Shewmr4_1560 (150 aa).

It belongs to the UPF0178 family.

This is UPF0178 protein Shewmr4_1560 from Shewanella sp. (strain MR-4).